Consider the following 187-residue polypeptide: Ribosome maturation factor RimM (187 aa).

A PRC barrel domain is found at 94–168 (DDEFYHADLV…RVIVDMPDGL (75 aa)). Residues 167 to 187 (GLIGGDKPDTSDTAPLGQDFD) form a disordered region.

The protein belongs to the RimM family. Binds ribosomal protein uS19.

The protein resides in the cytoplasm. An accessory protein needed during the final step in the assembly of 30S ribosomal subunit, possibly for assembly of the head region. Essential for efficient processing of 16S rRNA. May be needed both before and after RbfA during the maturation of 16S rRNA. It has affinity for free ribosomal 30S subunits but not for 70S ribosomes. This Jannaschia sp. (strain CCS1) protein is Ribosome maturation factor RimM.